The following is a 309-amino-acid chain: Elongation factor Ts (309 aa).

Residues 80–83 (TDFV) are involved in Mg(2+) ion dislocation from EF-Tu.

The protein belongs to the EF-Ts family.

The protein localises to the cytoplasm. In terms of biological role, associates with the EF-Tu.GDP complex and induces the exchange of GDP to GTP. It remains bound to the aminoacyl-tRNA.EF-Tu.GTP complex up to the GTP hydrolysis stage on the ribosome. The protein is Elongation factor Ts of Rhodospirillum rubrum (strain ATCC 11170 / ATH 1.1.1 / DSM 467 / LMG 4362 / NCIMB 8255 / S1).